The following is a 374-amino-acid chain: 2-aminoethylphosphonate--pyruvate transaminase 1 (374 aa).

Lys-195 is modified (N6-(pyridoxal phosphate)lysine).

The protein belongs to the class-V pyridoxal-phosphate-dependent aminotransferase family. PhnW subfamily. As to quaternary structure, homodimer. Pyridoxal 5'-phosphate is required as a cofactor.

The catalysed reaction is (2-aminoethyl)phosphonate + pyruvate = phosphonoacetaldehyde + L-alanine. Functionally, involved in phosphonate degradation. This chain is 2-aminoethylphosphonate--pyruvate transaminase 1, found in Polaromonas sp. (strain JS666 / ATCC BAA-500).